A 58-amino-acid chain; its full sequence is Small ribosomal subunit protein bS21 (58 aa).

Belongs to the bacterial ribosomal protein bS21 family.

This is Small ribosomal subunit protein bS21 from Lactobacillus johnsonii (strain CNCM I-12250 / La1 / NCC 533).